A 166-amino-acid polypeptide reads, in one-letter code: Large ribosomal subunit protein uL10 (166 aa).

The protein belongs to the universal ribosomal protein uL10 family. In terms of assembly, part of the ribosomal stalk of the 50S ribosomal subunit. The N-terminus interacts with L11 and the large rRNA to form the base of the stalk. The C-terminus forms an elongated spine to which L12 dimers bind in a sequential fashion forming a multimeric L10(L12)X complex.

Its function is as follows. Forms part of the ribosomal stalk, playing a central role in the interaction of the ribosome with GTP-bound translation factors. The chain is Large ribosomal subunit protein uL10 from Listeria monocytogenes serotype 4b (strain CLIP80459).